Reading from the N-terminus, the 437-residue chain is MDKKFYITTLGCPKNIADSMSMHHSLLEEGFTLASLPEESDFHFINTCTFIQSATEETIQTILSAAQVKKQNHQKLVVVGCFAERYPDNIHSEIPEVDLFFGTGKYSQAGKILREKFPELSPSQLEFNDSLLERWKLSSKIENYSKPYAYVKVSDGCNRGCSFCIIPSFRGKFVESPLDDILRDTNRAIRAGAKEICLVSQDTVYYGRDSEILLDMVRKVAEIDSLEILRLLYLYPDKKTEKLIRLMGETSKIAPYLESPLQHVSSKILKVMNRTGESSYFKDLFSLAREVKPGLEIRTSFIIGYPGEEPEDVDQILRFIEDTRPEKVNLFSYSPQEGTKGAQLKQTVSEKEKSKRINLIRDSHLEILEEIHESRIGRTYDAIVDGIEDGQVVVRRFQDAPEMDEVVYVDDVSLIPGRIGKVRIDSFYEYDMNGTWV.

One can recognise an MTTase N-terminal domain in the interval 3–118; the sequence is KKFYITTLGC…AGKILREKFP (116 aa). Positions 12, 48, 81, 157, 161, and 164 each coordinate [4Fe-4S] cluster. The Radical SAM core domain occupies 143-370; the sequence is NYSKPYAYVK…RDSHLEILEE (228 aa). Residues 373-437 form the TRAM domain; it reads ESRIGRTYDA…YEYDMNGTWV (65 aa).

The protein belongs to the methylthiotransferase family. RimO subfamily. [4Fe-4S] cluster is required as a cofactor.

The protein resides in the cytoplasm. The catalysed reaction is L-aspartate(89)-[ribosomal protein uS12]-hydrogen + (sulfur carrier)-SH + AH2 + 2 S-adenosyl-L-methionine = 3-methylsulfanyl-L-aspartate(89)-[ribosomal protein uS12]-hydrogen + (sulfur carrier)-H + 5'-deoxyadenosine + L-methionine + A + S-adenosyl-L-homocysteine + 2 H(+). Its function is as follows. Catalyzes the methylthiolation of an aspartic acid residue of ribosomal protein uS12. This is Ribosomal protein uS12 methylthiotransferase RimO from Leptospira interrogans serogroup Icterohaemorrhagiae serovar Lai (strain 56601).